Reading from the N-terminus, the 312-residue chain is Malate dehydrogenase (312 aa).

Residues 12–17 (GAGFTG) and D36 each bind NAD(+). Residues R87 and R93 each coordinate substrate. NAD(+) is bound by residues N100 and 123–125 (LTN). N125 is a binding site for substrate. S149 carries the post-translational modification Phosphoserine. R156 is a substrate binding site. The Proton acceptor role is filled by H180.

Belongs to the LDH/MDH superfamily. MDH type 3 family.

The catalysed reaction is (S)-malate + NAD(+) = oxaloacetate + NADH + H(+). Catalyzes the reversible oxidation of malate to oxaloacetate. The sequence is that of Malate dehydrogenase from Bacillus anthracis (strain A0248).